The sequence spans 284 residues: Homeobox-leucine zipper protein HAT4 (284 aa).

Residues 48–59 show a composition bias toward polar residues; sequence ESFTSSVPNSDS. Residues 48 to 132 form a disordered region; that stretch reads ESFTSSVPNS…DGDNSRKKLR (85 aa). Positions 89-100 are enriched in low complexity; the sequence is VSSPNSTVSSST. The segment at residues 126-185 is a DNA-binding region (homeobox); sequence NSRKKLRLSKDQSAILEETFKDHSTLNPKQKQALAKQLGLRARQVEVWFQNRRARTKLKQ. The segment at 193–214 is leucine-zipper; the sequence is LRRCCENLTEENRRLQKEVTEL.

Belongs to the HD-ZIP homeobox family. Class II subfamily. Interacts with DNA as homodimer. In terms of tissue distribution, predominantly expressed in leaves and stems.

It localises to the nucleus. In terms of biological role, probable transcription factor involved in the negative regulation of cell elongation and specific cell proliferation processes such as lateral root formation and secondary growth of the vascular system. Acts as a mediator of the red/far-red light effects on leaf cell expansion in the shading response. Binds to the DNA sequence 5'-CAAT[GC]ATTG-3'. Negatively regulates its own expression. This Arabidopsis thaliana (Mouse-ear cress) protein is Homeobox-leucine zipper protein HAT4 (HAT4).